The sequence spans 33 residues: Photosystem II reaction center protein Psb30 (33 aa).

A helical membrane pass occupies residues 5–25; it reads IVAQLTVLALIVVSGPLVIAL.

It belongs to the Psb30/Ycf12 family. In terms of assembly, PSII is composed of 1 copy each of membrane proteins PsbA, PsbB, PsbC, PsbD, PsbE, PsbF, PsbH, PsbI, PsbJ, PsbK, PsbL, PsbM, PsbT, PsbX, PsbY, PsbZ, Psb30/Ycf12, peripheral proteins of the oxygen-evolving complex and a large number of cofactors. It forms dimeric complexes.

It is found in the plastid. Its subcellular location is the chloroplast thylakoid membrane. A core subunit of photosystem II (PSII), probably helps stabilize the reaction center. The sequence is that of Photosystem II reaction center protein Psb30 from Angiopteris evecta (Mule's foot fern).